Consider the following 244-residue polypeptide: 5-oxoprolinase subunit A (244 aa).

The protein belongs to the LamB/PxpA family. In terms of assembly, forms a complex composed of PxpA, PxpB and PxpC.

It carries out the reaction 5-oxo-L-proline + ATP + 2 H2O = L-glutamate + ADP + phosphate + H(+). In terms of biological role, catalyzes the cleavage of 5-oxoproline to form L-glutamate coupled to the hydrolysis of ATP to ADP and inorganic phosphate. The polypeptide is 5-oxoprolinase subunit A (Salmonella agona (strain SL483)).